A 503-amino-acid polypeptide reads, in one-letter code: Ell-associated factor Eaf (503 aa).

Composition is skewed to polar residues over residues 143–158 (PGQQ…TNVA) and 170–189 (ENST…SRRN). Disordered regions lie at residues 143 to 223 (PGQQ…PAWD) and 251 to 503 (NGSQ…EDDD). At S199 the chain carries Phosphoserine. Positions 251 to 264 (NGSQANTSGSSTGS) are enriched in polar residues. The segment covering 281 to 296 (GKQRQAPHHGHAKRQQ) has biased composition (basic residues). Polar residues predominate over residues 297-311 (RSSPPMVQQQPNFGR). The span at 312-326 (NSYNGGNNYAQQQQH) shows a compositional bias: low complexity. Residues 382–397 (DSSDSDSGSDSDDSTE) show a composition bias toward acidic residues. Low complexity-rich tracts occupy residues 415-435 (MHHQ…QQQH) and 484-497 (NDLL…SSNS).

It belongs to the EAF family.

It localises to the nucleus. Its function is as follows. Promotes transcriptional elongation by Su(Tpl)/ELL. Essential for development. This is Ell-associated factor Eaf from Drosophila ananassae (Fruit fly).